The sequence spans 256 residues: Fructose-1,6-bisphosphatase/inositol-1-monophosphatase (256 aa).

Residues Glu67, Asp83, Leu85, and Asp86 each coordinate Mg(2+). Residues 86 to 88 (DGS), Arg170, Ile175, and Arg194 each bind substrate. Asp201 serves as a coordination point for Mg(2+).

It belongs to the inositol monophosphatase superfamily. FBPase class 4 family. As to quaternary structure, homodimer. Mg(2+) is required as a cofactor.

It carries out the reaction beta-D-fructose 1,6-bisphosphate + H2O = beta-D-fructose 6-phosphate + phosphate. The catalysed reaction is a myo-inositol phosphate + H2O = myo-inositol + phosphate. Its function is as follows. Phosphatase with broad specificity; it can dephosphorylate fructose 1,6-bisphosphate (FBP) and inositol-1-phosphate (IMP). However, while possessing a high FBPase activity in vitro, does not participate in gluconeogenesis in vivo. This chain is Fructose-1,6-bisphosphatase/inositol-1-monophosphatase (suhB), found in Thermococcus kodakarensis (strain ATCC BAA-918 / JCM 12380 / KOD1) (Pyrococcus kodakaraensis (strain KOD1)).